A 455-amino-acid polypeptide reads, in one-letter code: Argininosuccinate lyase (455 aa).

It belongs to the lyase 1 family. Argininosuccinate lyase subfamily.

It localises to the cytoplasm. It carries out the reaction 2-(N(omega)-L-arginino)succinate = fumarate + L-arginine. Its pathway is amino-acid biosynthesis; L-arginine biosynthesis; L-arginine from L-ornithine and carbamoyl phosphate: step 3/3. This is Argininosuccinate lyase from Shewanella baltica (strain OS223).